We begin with the raw amino-acid sequence, 419 residues long: Esterase FrsA (419 aa).

It belongs to the FrsA family.

It carries out the reaction a carboxylic ester + H2O = an alcohol + a carboxylate + H(+). Functionally, catalyzes the hydrolysis of esters. The polypeptide is Esterase FrsA (Photobacterium profundum (strain SS9)).